The primary structure comprises 345 residues: UDP-N-acetylenolpyruvoylglucosamine reductase (345 aa).

Residues 59–254 (VGGPAACLAR…RKATQPLGRP (196 aa)) enclose the FAD-binding PCMH-type domain. R209 is a catalytic residue. The active-site Proton donor is the C258. E328 is an active-site residue.

Belongs to the MurB family. It depends on FAD as a cofactor.

The protein resides in the cytoplasm. The catalysed reaction is UDP-N-acetyl-alpha-D-muramate + NADP(+) = UDP-N-acetyl-3-O-(1-carboxyvinyl)-alpha-D-glucosamine + NADPH + H(+). It functions in the pathway cell wall biogenesis; peptidoglycan biosynthesis. Its function is as follows. Cell wall formation. This is UDP-N-acetylenolpyruvoylglucosamine reductase from Syntrophobacter fumaroxidans (strain DSM 10017 / MPOB).